The following is a 175-amino-acid chain: Large ribosomal subunit protein uL15 (175 aa).

Positions 1–13 (MTIKLNELRDNNG) are enriched in basic and acidic residues. 2 disordered regions span residues 1-44 (MTIK…KARS) and 150-175 (VELPEARPEGDGKKATRKAEAAAKNA). Positions 23–37 (RGIGSGKGKTAGRGQ) are enriched in gly residues.

Belongs to the universal ribosomal protein uL15 family. In terms of assembly, part of the 50S ribosomal subunit.

Functionally, binds to the 23S rRNA. In Sphingopyxis alaskensis (strain DSM 13593 / LMG 18877 / RB2256) (Sphingomonas alaskensis), this protein is Large ribosomal subunit protein uL15.